Here is a 264-residue protein sequence, read N- to C-terminus: S-adenosylmethionine decarboxylase proenzyme (264 aa).

The Schiff-base intermediate with substrate; via pyruvic acid role is filled by Ser113. Ser113 carries the post-translational modification Pyruvic acid (Ser); by autocatalysis. The active-site Proton acceptor; for processing activity is the His118. Cys141 serves as the catalytic Proton donor; for catalytic activity.

The protein belongs to the prokaryotic AdoMetDC family. Type 2 subfamily. As to quaternary structure, heterooctamer of four alpha and four beta chains arranged as a tetramer of alpha/beta heterodimers. It depends on pyruvate as a cofactor. In terms of processing, is synthesized initially as an inactive proenzyme. Formation of the active enzyme involves a self-maturation process in which the active site pyruvoyl group is generated from an internal serine residue via an autocatalytic post-translational modification. Two non-identical subunits are generated from the proenzyme in this reaction, and the pyruvate is formed at the N-terminus of the alpha chain, which is derived from the carboxyl end of the proenzyme. The post-translation cleavage follows an unusual pathway, termed non-hydrolytic serinolysis, in which the side chain hydroxyl group of the serine supplies its oxygen atom to form the C-terminus of the beta chain, while the remainder of the serine residue undergoes an oxidative deamination to produce ammonia and the pyruvoyl group blocking the N-terminus of the alpha chain.

The catalysed reaction is S-adenosyl-L-methionine + H(+) = S-adenosyl 3-(methylsulfanyl)propylamine + CO2. It participates in amine and polyamine biosynthesis; S-adenosylmethioninamine biosynthesis; S-adenosylmethioninamine from S-adenosyl-L-methionine: step 1/1. Functionally, catalyzes the decarboxylation of S-adenosylmethionine to S-adenosylmethioninamine (dcAdoMet), the propylamine donor required for the synthesis of the polyamines spermine and spermidine from the diamine putrescine. In Pseudomonas aeruginosa (strain UCBPP-PA14), this protein is S-adenosylmethionine decarboxylase proenzyme.